Consider the following 615-residue polypeptide: Extracellular metalloproteinase 1 (615 aa).

The N-terminal stretch at 1-8 is a signal peptide; sequence SLPLHVLA. A propeptide spanning residues 9-235 is cleaved from the precursor; it reads HPQPSTSTSL…VHNVVDYVAH (227 aa). N-linked (GlcNAc...) asparagine glycosylation is present at N276. H419 provides a ligand contact to Zn(2+). The active site involves E420. H423 serves as a coordination point for Zn(2+). N464, N583, and N612 each carry an N-linked (GlcNAc...) asparagine glycan.

This sequence belongs to the peptidase M36 family. It depends on Zn(2+) as a cofactor.

The protein resides in the secreted. Secreted metalloproteinase probably acting as a virulence factor. The protein is Extracellular metalloproteinase 1 (MEP1) of Trichophyton equinum (Horse ringworm fungus).